Consider the following 1523-residue polypeptide: Slit homolog 3 protein (1523 aa).

The first 33 residues, 1-33, serve as a signal peptide directing secretion; that stretch reads MALGRTGAGAAVRARLALGLALASILSGPPAAA. Residues 34–61 enclose the LRRNT domain; sequence CPTKCTCSAASVDCHGLGLRAVPRGIPR. LRR repeat units follow at residues 62–83, 86–107, 110–131, 134–155, 158–179, and 182–203; these read NAER…DFAG, NLRV…AFQD, QLER…LFQS, KLTR…AFRG, GVKN…AFRA, and DLEI…SFNH. N72 carries N-linked (GlcNAc...) asparagine glycosylation. An N-linked (GlcNAc...) asparagine glycan is attached at N192. Residues 215–265 enclose the LRRCT 1 domain; sequence NHLYCDCHLAWLSDWLRQRRTIGQFTLCMAPVHLRGFSVADVQKKEYVCPG. Residues 271–307 enclose the LRRNT 2 domain; it reads PACNANSLSCPSACSCSNNIVDCRGKGLTEIPANLPE. C284 and C293 are joined by a disulfide. LRR repeat units follow at residues 308 to 329, 332 to 353, 356 to 377, 380 to 401, and 404 to 425; these read GIVE…AFTQ, KLKR…AFQG, SLTS…LFDG, SLQL…TFQD, and NLNL…LFVP. The 51-residue stretch at 437–487 folds into the LRRCT 2 domain; sequence NPFVCDCHLKWLADYLQDNPIETSGARCSSPRRLANKRISQIKSKKFRCSG. Disulfide bonds link C441/C464, C443/C485, C505/C511, and C509/C518. An LRRNT 3 domain is found at 496–532; the sequence is SSECFMDLVCPEKCRCEGTIVDCSNQKLARIPSHLPE. LRR repeat units lie at residues 533–554, 558–579, 582–603, 606–627, and 630–651; these read YTTD…GIFK, NLRK…AFDG, GVQE…MFRG, SLKT…TFAG, and SVRL…AFTT. A glycan (N-linked (GlcNAc...) asparagine) is linked at N563. N-linked (GlcNAc...) asparagine glycosylation is present at N622. The region spanning 663–713 is the LRRCT 3 domain; that stretch reads NPFNCNCHMAWLGRWLRKRRIVSGNPRCQKPFFLKEIPIQDVAIQDFTCDG. Cystine bridges form between C667-C690 and C669-C711. Residues 716-752 form the LRRNT 4 domain; it reads ESSCQLSPRCPEQCTCVETVVRCSNRGLHALPKGMPK. LRR repeat units follow at residues 753 to 774, 776 to 797, 800 to 821, and 824 to 845; these read DVTE…LSAF, QLTL…TFSN, HLST…AFNG, and SLRV…SFND. Residues N784, N792, and N797 are each glycosylated (N-linked (GlcNAc...) asparagine). In terms of domain architecture, LRRCT 4 spans 857 to 907; sequence NPLHCDCSLRWLSEWVKAGYKEPGIARCSSPESMADRLLLTTPTHRFQCKG. EGF-like domains lie at 918 to 953, 955 to 994, 996 to 1032, 1034 to 1072, 1074 to 1110, and 1119 to 1155; these read NACL…KDCT, PINT…QRCE, NPDD…ELCD, VIDY…KLCE, NNDD…LFCE, and QTSP…PRCE. Disulfide bonds link C920–C931, C925–C941, C943–C952, C959–C970, C964–C982, C984–C993, C1000–C1011, C1005–C1020, C1022–C1031, C1038–C1051, C1045–C1060, C1062–C1071, C1078–C1089, C1083–C1098, C1100–C1109, C1123–C1134, C1128–C1143, and C1145–C1154. N928 carries N-linked (GlcNAc...) asparagine glycosylation. Residue N1025 is glycosylated (N-linked (GlcNAc...) asparagine). The region spanning 1158–1332 is the Laminin G-like domain; the sequence is ITVNFVGKDS…PQSLGVSPGC (175 aa). N-linked (GlcNAc...) asparagine glycosylation is found at N1181 and N1247. Intrachain disulfides connect C1305-C1332, C1355-C1364, C1372-C1382, C1377-C1391, and C1393-C1402. EGF-like domains follow at residues 1340–1365 and 1368–1403; these read HGLC…PLCD and ARDP…ALCD. N1406 carries N-linked (GlcNAc...) asparagine glycosylation. An EGF-like 9 domain is found at 1408-1444; it reads SASACSAFKCHHGQCHISDRGEPYCLCQPGFSGHHCE. Intrachain disulfides connect C1412–C1422, C1417–C1432, C1434–C1443, C1449–C1487, C1467–C1501, C1478–C1517, and C1482–C1519. The 75-residue stretch at 1449–1523 folds into the CTCK domain; the sequence is CMGEIVREAI…HLECGCRACS (75 aa).

The protein localises to the secreted. In terms of biological role, may act as molecular guidance cue in cellular migration, and function may be mediated by interaction with roundabout homolog receptors. This chain is Slit homolog 3 protein (Slit3), found in Mus musculus (Mouse).